We begin with the raw amino-acid sequence, 437 residues long: tRNA(Ile2) 2-agmatinylcytidine synthetase TiaS (437 aa).

This sequence belongs to the TiaS family.

It localises to the cytoplasm. It carries out the reaction cytidine(34) in tRNA(Ile2) + agmatine + ATP + H2O = 2-agmatinylcytidine(34) in tRNA(Ile2) + AMP + 2 phosphate + 2 H(+). Its function is as follows. ATP-dependent agmatine transferase that catalyzes the formation of 2-agmatinylcytidine (agm2C) at the wobble position (C34) of tRNA(Ile2), converting the codon specificity from AUG to AUA. The chain is tRNA(Ile2) 2-agmatinylcytidine synthetase TiaS from Thermoplasma volcanium (strain ATCC 51530 / DSM 4299 / JCM 9571 / NBRC 15438 / GSS1).